Consider the following 732-residue polypeptide: Zinc/cadmium/lead-transporting P-type ATPase (732 aa).

The Cytoplasmic portion of the chain corresponds to 1–124 (MSTPDNHGKK…QAAEEPQASR (124 aa)). Positions 48 to 112 (TRYSWKVSGM…ALQKAGYSLR (65 aa)) constitute an HMA domain. Zn(2+) is bound by residues Asp-58, Cys-59, and Cys-62. Residues 125–145 (LKENLPLITLIVMMAISWGLE) form a helical membrane-spanning segment. Residue Gln-146 is a topological domain, periplasmic. The helical transmembrane segment at 147-167 (FNHPFGQLAFIATTLVGLYPI) threads the bilayer. Over 168 to 179 (ARQALRLIKSGS) the chain is Cytoplasmic. Residues 180-197 (YFAIETLMSVAAIGALFI) form a helical membrane-spanning segment. Over 198–202 (GATAE) the chain is Periplasmic. The chain crosses the membrane as a helical span at residues 203–222 (AAMVLLLFLIGERLEGWAAS). The Cytoplasmic segment spans residues 223-356 (RARQGVSALM…IDRFSRIYTP (134 aa)). The chain crosses the membrane as a helical span at residues 357–377 (AIMAVALLVTLVPPLLFAASW). Topologically, residues 378 to 383 (QEWIYK) are periplasmic. A helical membrane pass occupies residues 384 to 404 (GLTLLLIGCPCALVISTPAAI). Cys-392 and Cys-394 together coordinate Zn(2+). The Cytoplasmic segment spans residues 405–685 (TSGLAAAARR…RATHANIRQN (281 aa)). The active-site 4-aspartylphosphate intermediate is Asp-436. Residues Asp-436, Thr-438, and Asp-628 each contribute to the Mg(2+) site. A helical membrane pass occupies residues 686-702 (ITIALGLKGIFLVTTLL). Topologically, residues 703–707 (GMTGL) are periplasmic. Residues 708–729 (WLAVLADTGATVLVTANALRLL) form a helical membrane-spanning segment. Asp-714 contacts Zn(2+). The Cytoplasmic portion of the chain corresponds to 730 to 732 (RRR).

The protein belongs to the cation transport ATPase (P-type) (TC 3.A.3) family. Type IB subfamily.

It is found in the cell inner membrane. It carries out the reaction Pb(2+)(in) + ATP + H2O = Pb(2+)(out) + ADP + phosphate + H(+). The catalysed reaction is Zn(2+)(in) + ATP + H2O = Zn(2+)(out) + ADP + phosphate + H(+). The enzyme catalyses Cd(2+)(in) + ATP + H2O = Cd(2+)(out) + ADP + phosphate + H(+). Inhibited by orthovanadate. Its function is as follows. Confers resistance to zinc, cadmium and lead. Couples the hydrolysis of ATP with the export of zinc, cadmium or lead, with highest activity when the metals are present as metal-thiolate complexes. Can also bind nickel, copper, cobalt and mercury. This Escherichia coli (strain K12) protein is Zinc/cadmium/lead-transporting P-type ATPase.